We begin with the raw amino-acid sequence, 103 residues long: N(4)-acetylcytidine amidohydrolase (103 aa).

In terms of domain architecture, ASCH spans 6-101 (ITFFQRFQDD…QTQFYVIEFK (96 aa)). Catalysis depends on lysine 21, which acts as the Proton acceptor. The Nucleophile role is filled by threonine 24. Glutamate 74 acts as the Proton donor in catalysis.

This sequence belongs to the N(4)-acetylcytidine amidohydrolase family.

It catalyses the reaction N(4)-acetylcytidine + H2O = cytidine + acetate + H(+). The enzyme catalyses N(4)-acetyl-2'-deoxycytidine + H2O = 2'-deoxycytidine + acetate + H(+). It carries out the reaction N(4)-acetylcytosine + H2O = cytosine + acetate + H(+). Its function is as follows. Catalyzes the hydrolysis of N(4)-acetylcytidine (ac4C). In Escherichia coli O81 (strain ED1a), this protein is N(4)-acetylcytidine amidohydrolase (yqfB).